The primary structure comprises 34 residues: MSDIN-like toxin proprotein 12 (34 aa).

Positions Met1 to Pro10 are excised as a propeptide. Positions His11 to Pro19 form a cross-link, cyclopeptide (His-Pro). Positions Cys20–Gly34 are excised as a propeptide.

This sequence belongs to the MSDIN fungal toxin family. Post-translationally, processed by the macrocyclase-peptidase enzyme POPB to yield a toxic cyclic nonapeptide. POPB first removes 10 residues from the N-terminus. Conformational trapping of the remaining peptide forces the enzyme to release this intermediate rather than proceed to macrocyclization. The enzyme rebinds the remaining peptide in a different conformation and catalyzes macrocyclization of the N-terminal 9 residues.

Its function is as follows. Probable toxin that belongs to the MSDIN-like toxin family responsible for a large number of food poisoning cases and deaths. This Amanita bisporigera (Destroying angel) protein is MSDIN-like toxin proprotein 12.